A 163-amino-acid chain; its full sequence is Crossover junction endodeoxyribonuclease RuvC (163 aa).

Residues aspartate 9, glutamate 76, and aspartate 148 contribute to the active site. Mg(2+) is bound by residues aspartate 9, glutamate 76, and aspartate 148.

Belongs to the RuvC family. As to quaternary structure, homodimer which binds Holliday junction (HJ) DNA. The HJ becomes 2-fold symmetrical on binding to RuvC with unstacked arms; it has a different conformation from HJ DNA in complex with RuvA. In the full resolvosome a probable DNA-RuvA(4)-RuvB(12)-RuvC(2) complex forms which resolves the HJ. It depends on Mg(2+) as a cofactor.

It is found in the cytoplasm. It catalyses the reaction Endonucleolytic cleavage at a junction such as a reciprocal single-stranded crossover between two homologous DNA duplexes (Holliday junction).. In terms of biological role, the RuvA-RuvB-RuvC complex processes Holliday junction (HJ) DNA during genetic recombination and DNA repair. Endonuclease that resolves HJ intermediates. Cleaves cruciform DNA by making single-stranded nicks across the HJ at symmetrical positions within the homologous arms, yielding a 5'-phosphate and a 3'-hydroxyl group; requires a central core of homology in the junction. The consensus cleavage sequence is 5'-(A/T)TT(C/G)-3'. Cleavage occurs on the 3'-side of the TT dinucleotide at the point of strand exchange. HJ branch migration catalyzed by RuvA-RuvB allows RuvC to scan DNA until it finds its consensus sequence, where it cleaves and resolves the cruciform DNA. In Nostoc sp. (strain PCC 7120 / SAG 25.82 / UTEX 2576), this protein is Crossover junction endodeoxyribonuclease RuvC.